A 524-amino-acid chain; its full sequence is 2-isopropylmalate synthase (524 aa).

The Pyruvate carboxyltransferase domain occupies 12 to 274 (VIIFDTTLRD…WNRIETTMLT (263 aa)). Mn(2+) contacts are provided by Asp21, His209, His211, and Asn245. The tract at residues 398–524 (KLMSLTVIAG…EDAPTVAVAG (127 aa)) is regulatory domain.

Belongs to the alpha-IPM synthase/homocitrate synthase family. LeuA type 1 subfamily. In terms of assembly, homodimer. It depends on Mn(2+) as a cofactor.

The protein resides in the cytoplasm. It catalyses the reaction 3-methyl-2-oxobutanoate + acetyl-CoA + H2O = (2S)-2-isopropylmalate + CoA + H(+). It participates in amino-acid biosynthesis; L-leucine biosynthesis; L-leucine from 3-methyl-2-oxobutanoate: step 1/4. In terms of biological role, catalyzes the condensation of the acetyl group of acetyl-CoA with 3-methyl-2-oxobutanoate (2-ketoisovalerate) to form 3-carboxy-3-hydroxy-4-methylpentanoate (2-isopropylmalate). In Rhodopseudomonas palustris (strain TIE-1), this protein is 2-isopropylmalate synthase.